Consider the following 308-residue polypeptide: Phenylcoumaran benzylic ether reductase Pyrc5 (308 aa).

Residues 11–17, Arg36, and Lys45 each bind NADP(+); that span reads GGTGYIG. Residue Lys133 is the Proton acceptor of the active site. Arg137 is a binding site for NADP(+).

The protein belongs to the NmrA-type oxidoreductase family. Isoflavone reductase subfamily.

It carries out the reaction (-)-dehydrodiconiferyl alcohol + NADPH + H(+) = (S)-isodihydrodehydrodiconiferyl alcohol + NADP(+). The catalysed reaction is (+)-dehydrodiconiferyl alcohol + NADPH + H(+) = (R)-isodihydrodehydrodiconiferyl alcohol + NADP(+). In terms of biological role, oxidoreductase involved in lignan biosynthesis. Catalyzes the NADPH-dependent reduction of phenylcoumaran benzylic ethers. Converts dehydrodiconiferyl alcohol (DDC) to isodihydrodehydrodiconiferyl alcohol (IDDDC). This chain is Phenylcoumaran benzylic ether reductase Pyrc5, found in Pyrus communis (Pear).